We begin with the raw amino-acid sequence, 249 residues long: 5-oxoprolinase subunit A (249 aa).

The protein belongs to the LamB/PxpA family. Forms a complex composed of PxpA, PxpB and PxpC.

The catalysed reaction is 5-oxo-L-proline + ATP + 2 H2O = L-glutamate + ADP + phosphate + H(+). In terms of biological role, catalyzes the cleavage of 5-oxoproline to form L-glutamate coupled to the hydrolysis of ATP to ADP and inorganic phosphate. The protein is 5-oxoprolinase subunit A of Limosilactobacillus fermentum (strain NBRC 3956 / LMG 18251) (Lactobacillus fermentum).